Here is a 162-residue protein sequence, read N- to C-terminus: Peptidyl-prolyl cis-trans isomerase-like 1 (162 aa).

In terms of domain architecture, PPIase cyclophilin-type spans 1 to 155; that stretch reads MTTNIVLETT…EEVKIVKARV (155 aa).

Belongs to the cyclophilin-type PPIase family. PPIL1 subfamily.

It catalyses the reaction [protein]-peptidylproline (omega=180) = [protein]-peptidylproline (omega=0). Functionally, PPIases accelerate the folding of proteins. It catalyzes the cis-trans isomerization of proline imidic peptide bonds in oligopeptides. This chain is Peptidyl-prolyl cis-trans isomerase-like 1 (CYP1), found in Gibberella zeae (strain ATCC MYA-4620 / CBS 123657 / FGSC 9075 / NRRL 31084 / PH-1) (Wheat head blight fungus).